A 443-amino-acid polypeptide reads, in one-letter code: Tubulin beta chain (443 aa).

Residues Gln11, Glu69, Ser138, Gly142, Thr143, Gly144, Asn204, and Asn226 each contribute to the GTP site. Residue Glu69 coordinates Mg(2+).

It belongs to the tubulin family. As to quaternary structure, dimer of alpha and beta chains. A typical microtubule is a hollow water-filled tube with an outer diameter of 25 nm and an inner diameter of 15 nM. Alpha-beta heterodimers associate head-to-tail to form protofilaments running lengthwise along the microtubule wall with the beta-tubulin subunit facing the microtubule plus end conferring a structural polarity. Microtubules usually have 13 protofilaments but different protofilament numbers can be found in some organisms and specialized cells. The cofactor is Mg(2+).

Its subcellular location is the cytoplasm. The protein resides in the cytoskeleton. Functionally, tubulin is the major constituent of microtubules, a cylinder consisting of laterally associated linear protofilaments composed of alpha- and beta-tubulin heterodimers. Microtubules grow by the addition of GTP-tubulin dimers to the microtubule end, where a stabilizing cap forms. Below the cap, tubulin dimers are in GDP-bound state, owing to GTPase activity of alpha-tubulin. This chain is Tubulin beta chain, found in Thalassiosira weissflogii (Marine diatom).